Reading from the N-terminus, the 147-residue chain is Protein SOB FIVE-LIKE 2 (147 aa).

An SOFL-A motif is present at residues 18 to 23; it reads SGWTMY. The segment at 32–147 is disordered; it reads HHSEVVYEEE…ASRVKVSKTK (116 aa). Positions 37–77 are enriched in acidic residues; the sequence is VYEEEDDGFSVKEVDDDGDGDEDDDDDDDDDSSNNESDDSM. The SOFL-B motif lies at 76–85; that stretch reads SMTSDASSWP. The span at 78 to 93 shows a compositional bias: polar residues; sequence TSDASSWPSTHQPPRS. Low complexity predominate over residues 96–106; it reads NHAAAKNSNAK. Positions 114–131 are enriched in basic and acidic residues; sequence NRVRDRFSDEGEESELKA.

The protein belongs to the SOFL plant protein family. As to expression, predominantly expressed in the vascular tissues of seedlings, developing leaves, flowers and siliques, but barely detectable in roots and stems.

Its subcellular location is the cytoplasm. The protein resides in the nucleus. Involved in cytokinin-mediated development. Together with SOFL2, triggers the endogenous content of specific bioactive cytokinins derived from the biosynthetic intermediates trans-zeatin riboside monophosphate (tZRMP) and N(6)-(Delta(2)-isopentenyl)adenosine monophosphate (iPRMP) such as N-glucosides trans-zeatin 7-glucoside (tZ7G), cis-zeatin 7-glucoside (cZ7G) and N(6)-(Delta(2)-isopentenyl)adenine 7-glucoside (iP7G). This chain is Protein SOB FIVE-LIKE 2, found in Arabidopsis thaliana (Mouse-ear cress).